Reading from the N-terminus, the 309-residue chain is MNNPSLLNHAVETMAVGSKSFATASKLFDAKTRRSVLMLYAWCRHCDDVIDDQTLGFQARQPALQTPEQRLMQLEMKTRQAYAGSQMHEPAFAAFQEVAMAHDIAPAYAFDHLEGFAMDVREAQYSQLDDTLRYCYHVAGVVGLMMAQIMGVRDNATLDRACDLGLAFQLTNIARDIVDDAHAGRCYLPASWLEHEGLNKENYAAPENRQALSRIARRLVQEAEPYYLSATAGLAGLPLRSAWAIATAKQVYRKIGVKVEQAGQQAWDQRQSTTTPEKLTLLLAASGQALTSRMRAHPPRPAHLWQRPL.

The segment at 290–309 (LTSRMRAHPPRPAHLWQRPL) is disordered.

Belongs to the phytoene/squalene synthase family. ATP serves as cofactor. Mn(2+) is required as a cofactor. Requires Mg(2+) as cofactor.

The enzyme catalyses 2 (2E,6E,10E)-geranylgeranyl diphosphate = 15-cis-phytoene + 2 diphosphate. The protein operates within carotenoid biosynthesis; phytoene biosynthesis. Its activity is regulated as follows. Inhibited by phosphate ions and squalestatin. Functionally, involved in the biosynthesis of carotenoids. Catalyzes the condensation of two molecules of geranylgeranyl diphosphate (GGPP) to give prephytoene diphosphate (PPPP) and the subsequent rearrangement of the cyclopropylcarbinyl intermediate to yield the 15-cis-phytoene isomer. The sequence is that of 15-cis-phytoene synthase (crtB) from Pantoea ananas (Erwinia uredovora).